A 313-amino-acid polypeptide reads, in one-letter code: Porphobilinogen deaminase (313 aa).

Cys241 is modified (S-(dipyrrolylmethanemethyl)cysteine).

The protein belongs to the HMBS family. As to quaternary structure, monomer. Requires dipyrromethane as cofactor.

The catalysed reaction is 4 porphobilinogen + H2O = hydroxymethylbilane + 4 NH4(+). Its pathway is porphyrin-containing compound metabolism; protoporphyrin-IX biosynthesis; coproporphyrinogen-III from 5-aminolevulinate: step 2/4. It functions in the pathway porphyrin-containing compound metabolism; chlorophyll biosynthesis. Tetrapolymerization of the monopyrrole PBG into the hydroxymethylbilane pre-uroporphyrinogen in several discrete steps. The sequence is that of Porphobilinogen deaminase from Chlorobium luteolum (strain DSM 273 / BCRC 81028 / 2530) (Pelodictyon luteolum).